The primary structure comprises 677 residues: UvrABC system protein B (677 aa).

In terms of domain architecture, Helicase ATP-binding spans 24–412; it reads EGVLQGVPAQ…EGIVVEQVIR (389 aa). 37–44 is a binding site for ATP; that stretch reads GVTGSGKT. Positions 90–113 match the Beta-hairpin motif; it reads YYDYYQPEAYLPNSDTYIEKDLAI. Positions 429 to 591 constitute a Helicase C-terminal domain; it reads QIDDLMEEIQ…ITPQQIKKAR (163 aa). Residues 636–671 enclose the UVR domain; that stretch reads EKSIERTRKLMQEAAKKLEFIEAAQYRNELLKLEDL.

It belongs to the UvrB family. As to quaternary structure, forms a heterotetramer with UvrA during the search for lesions. Interacts with UvrC in an incision complex.

It is found in the cytoplasm. Its function is as follows. The UvrABC repair system catalyzes the recognition and processing of DNA lesions. A damage recognition complex composed of 2 UvrA and 2 UvrB subunits scans DNA for abnormalities. Upon binding of the UvrA(2)B(2) complex to a putative damaged site, the DNA wraps around one UvrB monomer. DNA wrap is dependent on ATP binding by UvrB and probably causes local melting of the DNA helix, facilitating insertion of UvrB beta-hairpin between the DNA strands. Then UvrB probes one DNA strand for the presence of a lesion. If a lesion is found the UvrA subunits dissociate and the UvrB-DNA preincision complex is formed. This complex is subsequently bound by UvrC and the second UvrB is released. If no lesion is found, the DNA wraps around the other UvrB subunit that will check the other stand for damage. This Bacteroides thetaiotaomicron (strain ATCC 29148 / DSM 2079 / JCM 5827 / CCUG 10774 / NCTC 10582 / VPI-5482 / E50) protein is UvrABC system protein B.